Consider the following 263-residue polypeptide: 4-hydroxy-tetrahydrodipicolinate reductase (263 aa).

Residues 7–12, 96–98, and 122–125 contribute to the NAD(+) site; these read GFKGRM, GTT, and APNF. His-152 serves as the catalytic Proton donor/acceptor. His-153 contributes to the (S)-2,3,4,5-tetrahydrodipicolinate binding site. Lys-156 acts as the Proton donor in catalysis. 162 to 163 is a binding site for (S)-2,3,4,5-tetrahydrodipicolinate; that stretch reads GT.

This sequence belongs to the DapB family.

Its subcellular location is the cytoplasm. The catalysed reaction is (S)-2,3,4,5-tetrahydrodipicolinate + NAD(+) + H2O = (2S,4S)-4-hydroxy-2,3,4,5-tetrahydrodipicolinate + NADH + H(+). The enzyme catalyses (S)-2,3,4,5-tetrahydrodipicolinate + NADP(+) + H2O = (2S,4S)-4-hydroxy-2,3,4,5-tetrahydrodipicolinate + NADPH + H(+). It participates in amino-acid biosynthesis; L-lysine biosynthesis via DAP pathway; (S)-tetrahydrodipicolinate from L-aspartate: step 4/4. Functionally, catalyzes the conversion of 4-hydroxy-tetrahydrodipicolinate (HTPA) to tetrahydrodipicolinate. In Listeria monocytogenes serotype 4b (strain CLIP80459), this protein is 4-hydroxy-tetrahydrodipicolinate reductase.